Here is a 308-residue protein sequence, read N- to C-terminus: Transaldolase (308 aa).

The active-site Schiff-base intermediate with substrate is the lysine 125.

Belongs to the transaldolase family. Type 1 subfamily. In terms of assembly, homodimer.

The protein resides in the cytoplasm. The catalysed reaction is D-sedoheptulose 7-phosphate + D-glyceraldehyde 3-phosphate = D-erythrose 4-phosphate + beta-D-fructose 6-phosphate. It functions in the pathway carbohydrate degradation; pentose phosphate pathway; D-glyceraldehyde 3-phosphate and beta-D-fructose 6-phosphate from D-ribose 5-phosphate and D-xylulose 5-phosphate (non-oxidative stage): step 2/3. In terms of biological role, transaldolase is important for the balance of metabolites in the pentose-phosphate pathway. This is Transaldolase from Pseudomonas putida (strain ATCC 47054 / DSM 6125 / CFBP 8728 / NCIMB 11950 / KT2440).